Consider the following 485-residue polypeptide: Otoconin-90 (485 aa).

The N-terminal stretch at 1-17 is a signal peptide; that stretch reads MIMLLMVGMLMAPCVGA. Asn37 is a glycosylation site (N-linked (GlcNAc...) asparagine). Residues 75–189 are phospholipase A2-like 1; that stretch reads LLQFVNSMRC…SLNFLDASFC (115 aa). Disulfide bonds link Cys84–Cys144, Cys98–Cys189, Cys100–Cys116, Cys115–Cys171, Cys122–Cys164, Cys131–Cys157, and Cys151–Cys162. 2 N-linked (GlcNAc...) asparagine glycosylation sites follow: Asn178 and Asn288. Phospholipase A2-like stretches follow at residues 315 to 371 and 383 to 435; these read MLQL…QVGC and CEDH…PVSC. N-linked (GlcNAc...) asparagine glycosylation occurs at Asn417. A disordered region spans residues 444–485; that stretch reads LASSVDSSSEENSEEAPPQMERLRRFLEKPPGPLGARPLGGK.

It belongs to the phospholipase A2 family. As to quaternary structure, interacts with OTOL1. In the embryo, highly expressed in the developing otocyst with weak expression in the brain. Also expressed in nonsensory epithelia of both the vestibular and cochlear portions of the developing inner ear. Not expressed in adult or embryonic macular sensory epithelia.

It localises to the secreted. Its function is as follows. Major protein of the otoconia, a calcium carbonate structure in the saccule and utricle of the ear. Together with OTOL1, acts as a scaffold for otoconia biomineralization: sequesters calcium and forms interconnecting fibrils between otoconia that are incorporated into the calcium crystal structure. Together with OTOL1, modulates calcite crystal morphology and growth kinetics. It is unlikely that this protein has phospholipase A2 activity. The polypeptide is Otoconin-90 (Mus musculus (Mouse)).